The sequence spans 948 residues: UvrABC system protein A (948 aa).

33-40 (GLSGSGKS) contacts ATP. The C4-type zinc finger occupies 252-279 (CPICGFSIGELEPRMFSFNSPFGACPTC). 2 ABC transporter domains span residues 309–587 (WIPT…KKSL) and 607–935 (ASDR…KYLK). 639–646 (GVSGSGKS) contacts ATP. The segment at 738–764 (CEACKGDGIIKIEMHFLPDVYVPCEVC) adopts a C4-type zinc-finger fold.

This sequence belongs to the ABC transporter superfamily. UvrA family. As to quaternary structure, forms a heterotetramer with UvrB during the search for lesions.

It localises to the cytoplasm. In terms of biological role, the UvrABC repair system catalyzes the recognition and processing of DNA lesions. UvrA is an ATPase and a DNA-binding protein. A damage recognition complex composed of 2 UvrA and 2 UvrB subunits scans DNA for abnormalities. When the presence of a lesion has been verified by UvrB, the UvrA molecules dissociate. This chain is UvrABC system protein A, found in Staphylococcus aureus (strain MRSA252).